Reading from the N-terminus, the 259-residue chain is tRNA-cytidine(32) 2-sulfurtransferase (259 aa).

A PP-loop motif motif is present at residues 37 to 42; sequence SGGKDS. [4Fe-4S] cluster-binding residues include C112, C115, and C202.

The protein belongs to the TtcA family. Homodimer. The cofactor is Mg(2+). [4Fe-4S] cluster is required as a cofactor.

The protein localises to the cytoplasm. It catalyses the reaction cytidine(32) in tRNA + S-sulfanyl-L-cysteinyl-[cysteine desulfurase] + AH2 + ATP = 2-thiocytidine(32) in tRNA + L-cysteinyl-[cysteine desulfurase] + A + AMP + diphosphate + H(+). It participates in tRNA modification. Functionally, catalyzes the ATP-dependent 2-thiolation of cytidine in position 32 of tRNA, to form 2-thiocytidine (s(2)C32). The sulfur atoms are provided by the cysteine/cysteine desulfurase (IscS) system. In Syntrophotalea carbinolica (strain DSM 2380 / NBRC 103641 / GraBd1) (Pelobacter carbinolicus), this protein is tRNA-cytidine(32) 2-sulfurtransferase.